Here is a 151-residue protein sequence, read N- to C-terminus: 3-hydroxyacyl-[acyl-carrier-protein] dehydratase FabZ (151 aa).

Residue His54 is part of the active site.

It belongs to the thioester dehydratase family. FabZ subfamily.

It localises to the cytoplasm. The enzyme catalyses a (3R)-hydroxyacyl-[ACP] = a (2E)-enoyl-[ACP] + H2O. Functionally, involved in unsaturated fatty acids biosynthesis. Catalyzes the dehydration of short chain beta-hydroxyacyl-ACPs and long chain saturated and unsaturated beta-hydroxyacyl-ACPs. This is 3-hydroxyacyl-[acyl-carrier-protein] dehydratase FabZ from Klebsiella pneumoniae (strain 342).